Consider the following 106-residue polypeptide: Small ribosomal subunit protein uS10 (106 aa).

The protein belongs to the universal ribosomal protein uS10 family. As to quaternary structure, part of the 30S ribosomal subunit.

Involved in the binding of tRNA to the ribosomes. In Synechococcus sp. (strain CC9311), this protein is Small ribosomal subunit protein uS10.